The sequence spans 331 residues: UPF0194 membrane protein CKO_02332 (331 aa).

A signal peptide spans 1–15 (MKKPVVIALAVAALA). Residues 142–207 (ISANDLENAR…ELDLQDTTLI (66 aa)) adopt a coiled-coil conformation.

Belongs to the UPF0194 family.

The protein resides in the periplasm. This Citrobacter koseri (strain ATCC BAA-895 / CDC 4225-83 / SGSC4696) protein is UPF0194 membrane protein CKO_02332.